The primary structure comprises 448 residues: C4-dicarboxylate transport protein (448 aa).

9 consecutive transmembrane segments (helical) span residues 9 to 29, 59 to 79, 91 to 111, 159 to 179, 203 to 223, 237 to 257, 312 to 332, 345 to 365, and 367 to 387; these read SLYFQVIVAIIAGILVGHFYP, LIKMIIAPVIFCTVVSGIAGM, VALLYFEVVSTIALLIGLLVI, AFANGEILQVLLFAIMFGFAL, IVNMIMKLAPIGAFGAMAFTI, LIICFYVTCLLFIFIVLGTIS, GYSFNLDGTSIYLTMAAIFIA, ITLLLVLLISSKGAAGVTGSG, and IVMAATLSAVGHIPVAGLALI.

The protein belongs to the dicarboxylate/amino acid:cation symporter (DAACS) (TC 2.A.23) family.

It is found in the cell inner membrane. Functionally, responsible for the transport of dicarboxylates such as succinate, fumarate, and malate from the periplasm across the membrane. This is C4-dicarboxylate transport protein from Acinetobacter baylyi (strain ATCC 33305 / BD413 / ADP1).